A 675-amino-acid polypeptide reads, in one-letter code: Acetyl-coenzyme A synthetase 1 (675 aa).

Positions 1-10 (MPESTQQSHL) are enriched in polar residues. The segment at 1-32 (MPESTQQSHLSLDHEKMQQPPKGFTERSKTKP) is disordered. Residues 212–215 (RGGK) and Thr331 contribute to the CoA site. ATP contacts are provided by residues 407 to 409 (GEP), 431 to 436 (DTYWQT), Asp522, and Arg537. CoA is bound at residue Ser545. Arg548 contacts ATP. Arg609 lines the CoA pocket.

Belongs to the ATP-dependent AMP-binding enzyme family.

It carries out the reaction acetate + ATP + CoA = acetyl-CoA + AMP + diphosphate. The chain is Acetyl-coenzyme A synthetase 1 (ACS1) from Candida albicans (Yeast).